A 325-amino-acid polypeptide reads, in one-letter code: Glutarate 2-hydroxylase (325 aa).

Positions 160, 162, and 292 each coordinate Fe cation.

The protein belongs to the glutarate hydroxylase family. As to quaternary structure, homotetramer. Fe(2+) is required as a cofactor.

The enzyme catalyses glutarate + 2-oxoglutarate + O2 = (S)-2-hydroxyglutarate + succinate + CO2. It functions in the pathway amino-acid degradation. Functionally, acts as an alpha-ketoglutarate-dependent dioxygenase catalyzing hydroxylation of glutarate (GA) to L-2-hydroxyglutarate (L2HG). Functions in a L-lysine degradation pathway that proceeds via cadaverine, glutarate and L-2-hydroxyglutarate. The sequence is that of Glutarate 2-hydroxylase from Salmonella newport (strain SL254).